The following is a 622-amino-acid chain: Polygalacturonase 1 beta-like protein 1 (622 aa).

A signal peptide spans 1 to 21 (MRKQFVFLLPFLSRLYHVVIA). One copy of the FXXY 1 repeat lies at 118–121 (FSVY). Asn125 is a glycosylation site (N-linked (GlcNAc...) asparagine). FXXY repeat units follow at residues 126–129 (FTNY), 140–143 (FKKY), 154–157 (FRRY), 168–171 (FTGY), 182–185 (FNSY), 196–199 (FKNY), 210–213 (FKAY), 224–227 (FKTY), 239–242 (FTSY), 253–256 (FSSY), and 267–270 (FSNY). A glycan (N-linked (GlcNAc...) asparagine) is linked at Asn278. 7 FXXY repeats span residues 281–284 (FKGY), 295–298 (FKSY), 309–312 (FLNY), 323–326 (FSSY), 337–340 (FVNY), 351–354 (FSGY), and 365–368 (FKTY). N-linked (GlcNAc...) asparagine glycosylation is present at Asn371. 2 FXXY repeats span residues 374–377 (FKDY) and 384–387 (FAKY). N-linked (GlcNAc...) asparagine glycans are attached at residues Asn388 and Asn461. The BURP domain maps to 407–621 (FFRESMLKEG…FENDMNWAIA (215 aa)).

Expressed in flowers and stems.

The protein resides in the secreted. It is found in the extracellular space. The protein localises to the apoplast. Its subcellular location is the cell wall. In terms of biological role, involved in cell size determination. The sequence is that of Polygalacturonase 1 beta-like protein 1 from Arabidopsis thaliana (Mouse-ear cress).